The chain runs to 828 residues: MMKRNNEGIGGEGVANSPPDDTQQKRRRIQFEAVKMPAVQSVTELRSRTVAIQAAKLRQTVLIKNKRISDLERENERAKRRQLTDESNFLKVYNLFSELEKFIWAQTKDEFGEVKMTPSAPAGTDVQGMTSEQYHSFVDTAKGNLRIAFNSYAKARHDRTTETANFIARLKTLMADPKLNINDIHKELAAKTASLLAQIDKLQAEAHRVQSENHNLERKRRHMVDKNTLLESRIQEMEKLLEEAHFETEKQMRLACKYEARLILEHEAASGNATASSSATLNQSEKKMGSPGSPPSESTSREIEALRADRDEQAAIAARRLQELEDTNRKLQSMAQDISKLKMETQSSVPSDVITNSEEYRNLKKYYSLAIKEHERICKDLEDVTVERDQLRSVKENREKMMSEEHQKTIKEIQHQSEIHNTFYRVSHDSEVLRAEFETVKEEYNKTVKQSEWDEMKATVNTLRSLNKTMKSQMQRMKDREKASQKEHSAVKTELKTLKDQLEKSVLVPLEDSGNTSTEDANKIRAEYESLKREIRRIGAMDKQEKQRQLDREIQRHIADKVTELETLRKTNEALTNDEQTLSDELEVVCLTIEEEQERNAQLFMEKRDQEDRNLKMMNERMIQNQVQSRMREKLECLESKAQTDAQIAKMHEFEKKASDEVLNKLTENLQFKTSEVTRLSNMMEVHRKQTQELGFARDENQVKVDRCEAQLKQYQDLYGSKSREVEEAKFKRQRAEEELELVRVKYERAKRNDSAQTGDQVLQEANRQMKETLTCPSCKTRPKDCIMLKCYHLFCETCIKTMYDTRQRKCPKCNSNFGANDFHRIFI.

The segment at 1–25 (MMKRNNEGIGGEGVANSPPDDTQQK) is disordered. The interaction with ubc-1 stretch occupies residues 1–309 (MMKRNNEGIG…SREIEALRAD (309 aa)). Coiled coils occupy residues 53-92 (QAAK…FLKV) and 185-251 (HKEL…TEKQ). A compositionally biased stretch (low complexity) spans 269 to 298 (ASGNATASSSATLNQSEKKMGSPGSPPSES). A disordered region spans residues 269-304 (ASGNATASSSATLNQSEKKMGSPGSPPSESTSREIE). Coiled coils occupy residues 311 to 345 (DEQA…KMET), 460 to 616 (VNTL…RNLK), and 660 to 756 (DEVL…NDSA). The RING-type zinc-finger motif lies at 776–815 (CPSCKTRPKDCIMLKCYHLFCETCIKTMYDTRQRKCPKCN).

It belongs to the BRE1 family. As to quaternary structure, interacts with ubc-1. Interacts with mrg-1.

It is found in the nucleus. It catalyses the reaction S-ubiquitinyl-[E2 ubiquitin-conjugating enzyme]-L-cysteine + [acceptor protein]-L-lysine = [E2 ubiquitin-conjugating enzyme]-L-cysteine + N(6)-ubiquitinyl-[acceptor protein]-L-lysine.. It participates in protein modification; protein ubiquitination. E3 ubiquitin-protein ligase that mediates monoubiquitination of 'Lys-117' of histone H2B. H2B 'Lys-117' ubiquitination gives a specific tag for epigenetic transcriptional activation and is also prerequisite for histone H3 'Lys-4' and 'Lys-79' methylation. Involved in regulating stem cell proliferative fate. The chain is E3 ubiquitin-protein ligase bre-1 from Caenorhabditis briggsae.